Reading from the N-terminus, the 338-residue chain is UDP-N-acetylenolpyruvoylglucosamine reductase (338 aa).

Positions 17–188 (IAARTDWWID…MYVDYRLRLR (172 aa)) constitute an FAD-binding PCMH-type domain. Residue arginine 164 is part of the active site. Serine 237 functions as the Proton donor in the catalytic mechanism. Residue glutamate 333 is part of the active site.

The protein belongs to the MurB family. FAD serves as cofactor.

The protein localises to the cytoplasm. The enzyme catalyses UDP-N-acetyl-alpha-D-muramate + NADP(+) = UDP-N-acetyl-3-O-(1-carboxyvinyl)-alpha-D-glucosamine + NADPH + H(+). Its pathway is cell wall biogenesis; peptidoglycan biosynthesis. Cell wall formation. This is UDP-N-acetylenolpyruvoylglucosamine reductase from Porphyromonas gingivalis (strain ATCC 33277 / DSM 20709 / CIP 103683 / JCM 12257 / NCTC 11834 / 2561).